The following is a 207-amino-acid chain: LexA repressor (207 aa).

Residues 28-48 (VREIGEAVGLASSSTVHGHLA) constitute a DNA-binding region (H-T-H motif). Catalysis depends on for autocatalytic cleavage activity residues serine 129 and lysine 167.

This sequence belongs to the peptidase S24 family. As to quaternary structure, homodimer.

The catalysed reaction is Hydrolysis of Ala-|-Gly bond in repressor LexA.. In terms of biological role, represses a number of genes involved in the response to DNA damage (SOS response), including recA and lexA. In the presence of single-stranded DNA, RecA interacts with LexA causing an autocatalytic cleavage which disrupts the DNA-binding part of LexA, leading to derepression of the SOS regulon and eventually DNA repair. The polypeptide is LexA repressor (Geobacillus thermodenitrificans (strain NG80-2)).